Consider the following 187-residue polypeptide: Large ribosomal subunit protein uL6 (187 aa).

The protein belongs to the universal ribosomal protein uL6 family. Part of the 50S ribosomal subunit.

Its function is as follows. This protein binds to the 23S rRNA, and is important in its secondary structure. It is located near the subunit interface in the base of the L7/L12 stalk, and near the tRNA binding site of the peptidyltransferase center. The polypeptide is Large ribosomal subunit protein uL6 (Chloroflexus aggregans (strain MD-66 / DSM 9485)).